We begin with the raw amino-acid sequence, 120 residues long: MFSLQGYEYFLGFLLISGAVPILALTTNKLIAPKSKAGERQLTYESGMEPIGGAWIQFNIRYYMFALVFVIFDVETVFLYPWAVAFHKLGLLAFIEALVFITILVVALAYAWRKGALEWS.

3 consecutive transmembrane segments (helical) span residues 6-26 (GYEYFLGFLLISGAVPILALT), 64-84 (MFALVFVIFDVETVFLYPWAV), and 89-109 (LGLLAFIEALVFITILVVALA).

This sequence belongs to the complex I subunit 3 family. As to quaternary structure, NDH-1 can be composed of about 15 different subunits; different subcomplexes with different compositions have been identified which probably have different functions.

The protein localises to the cellular thylakoid membrane. The catalysed reaction is a plastoquinone + NADH + (n+1) H(+)(in) = a plastoquinol + NAD(+) + n H(+)(out). It catalyses the reaction a plastoquinone + NADPH + (n+1) H(+)(in) = a plastoquinol + NADP(+) + n H(+)(out). Functionally, NDH-1 shuttles electrons from an unknown electron donor, via FMN and iron-sulfur (Fe-S) centers, to quinones in the respiratory and/or the photosynthetic chain. The immediate electron acceptor for the enzyme in this species is believed to be plastoquinone. Couples the redox reaction to proton translocation, and thus conserves the redox energy in a proton gradient. Cyanobacterial NDH-1 also plays a role in inorganic carbon-concentration. This is NAD(P)H-quinone oxidoreductase subunit 3 from Prochlorococcus marinus (strain NATL1A).